A 177-amino-acid polypeptide reads, in one-letter code: Transcription antitermination protein NusB (177 aa).

The disordered stretch occupies residues 1-35 (MTDSANPTPSARPPRQPRTGTTGTGARKAGSKSGR). The segment covering 17-28 (PRTGTTGTGARK) has biased composition (low complexity).

The protein belongs to the NusB family.

In terms of biological role, involved in transcription antitermination. Required for transcription of ribosomal RNA (rRNA) genes. Binds specifically to the boxA antiterminator sequence of the ribosomal RNA (rrn) operons. This Acidovorax ebreus (strain TPSY) (Diaphorobacter sp. (strain TPSY)) protein is Transcription antitermination protein NusB.